The following is a 423-amino-acid chain: Levansucrase (423 aa).

5 residues coordinate sucrose: Trp-47, Asp-48, Ser-119, Arg-193, and Asp-194. The active-site Nucleophile is the Asp-48. Glu-278 functions as the Proton donor/acceptor in the catalytic mechanism.

It belongs to the glycosyl hydrolase 68 family.

It is found in the secreted. The catalysed reaction is [6)-beta-D-fructofuranosyl-(2-&gt;](n) alpha-D-glucopyranoside + sucrose = [6)-beta-D-fructofuranosyl-(2-&gt;](n+1) alpha-D-glucopyranoside + D-glucose. In terms of biological role, catalyzes the synthesis of levan, a fructose polymer, by transferring the fructosyl moiety from sucrose to a growing acceptor molecule. The sequence is that of Levansucrase from Zymomonas mobilis subsp. mobilis (strain ATCC 10988 / DSM 424 / LMG 404 / NCIMB 8938 / NRRL B-806 / ZM1).